The primary structure comprises 418 residues: Metacaspase-4 (418 aa).

Catalysis depends on residues histidine 86 and cysteine 139. Cysteine 139 carries the S-nitrosocysteine modification. Positions 153-172 (GESTKKEAEDEDESEESSSR) are disordered.

It belongs to the peptidase C14B family. Post-translationally, the two subunits are derived from the precursor sequence by an autocatalytic mechanism. As to expression, expressed in roots, cotyledons, leaves, cauline leaves, pollen and embryos.

It localises to the cytoplasm. The protein localises to the cytosol. Its activity is regulated as follows. Activated by Ca(2+) which induces self-processing and accelerates the rate of the enzyme activity, but has no effect on Km. In terms of biological role, cysteine protease that cleaves specifically after arginine or lysine residues. Does not cleave caspase-specific substrates. Plays a positive regulatory role in biotic and abiotic stress-induced programmed cell death. The chain is Metacaspase-4 (AMC4) from Arabidopsis thaliana (Mouse-ear cress).